A 566-amino-acid chain; its full sequence is MPQASEHRLGRTREPPVNVQPRVGAKIPFPPRARSKERRNPVPGPNSMLRPLPPRPGPPDERLKKLELGRGRTSGSRPRGPLRADHGVPLPGSPPPAVALPLPSRTNLARSKSVSSGDLRPMGIALGGHRGAGELGAALSRLALRPEPPTLRRSTSLRRLGGFPGPPTLLSIRTEPPTSHGSFHMISARPSEPFYSDDKMAHHTLLLGSGHVGLRNLGNTCFLNAVLQCLSSTRPLRDFCLRRDFRQEVPGGGRAQELTEAFADVIGALWHPDSCEAVNPTRFRAVFQKYVPSFSGYSQQDAQEFLKLLMERLHLEINRRGRRAPPILASGPVPSPPRRGGGALHEEPELSDDDRANLMWKRYLEREDSKIVDLFVGQLKSCLKCQACGYRSTTFEVFCDLSLPIPKKGFAGGKVSLRDCFSLFTKEEELESENAPVCDRCRQKTRSTKKLTVQRFPRILVLHLNRFSTSRGSIKKSSVGVDFPLQRLSLGDFASDKAGSPVYQLYALCNHSGSVHYGHYTALCRCQTGWHVYNDSRVSPVSENQVASSEGYVLFYQLMQEPLRCL.

Composition is skewed to basic and acidic residues over residues 1–14 (MPQA…RTRE) and 58–70 (PPDE…ELGR). Disordered regions lie at residues 1-103 (MPQA…LPLP) and 146-169 (PEPP…PPTL). 2 stretches are compositionally biased toward low complexity: residues 71–81 (GRTSGSRPRGP) and 151–160 (LRRSTSLRRL). The short motif at 134–152 (ELGAALSRLALRPEPPTLR) is the Nuclear export signal element. A USP domain is found at 212 to 559 (VGLRNLGNTC…EGYVLFYQLM (348 aa)). Cys221 serves as the catalytic Nucleophile. Residues 324–349 (APPILASGPVPSPPRRGGGALHEEPE) form a disordered region. Zn(2+) is bound by residues Cys385, Cys388, Cys438, and Cys441. Residue His519 is the Proton acceptor of the active site.

This sequence belongs to the peptidase C19 family. USP21 subfamily. As to quaternary structure, interacts with BEND3.

Its subcellular location is the cytoplasm. The protein localises to the nucleus. It carries out the reaction Thiol-dependent hydrolysis of ester, thioester, amide, peptide and isopeptide bonds formed by the C-terminal Gly of ubiquitin (a 76-residue protein attached to proteins as an intracellular targeting signal).. Its function is as follows. Deubiquitinates histone H2A, a specific tag for epigenetic transcriptional repression, thereby acting as a coactivator. Deubiquitination of histone H2A releaves the repression of di- and trimethylation of histone H3 at 'Lys-4', resulting in regulation of transcriptional initiation. Regulates gene expression via histone H2A deubiquitination. Deubiquitinates BAZ2A/TIP5 leading to its stabilization. Also capable of removing NEDD8 from NEDD8 conjugates but has no effect on Sentrin-1 conjugates. Also acts as a negative regulator of the ribosome quality control (RQC) by mediating deubiquitination of 40S ribosomal proteins RPS10/eS10 and RPS20/uS10, thereby antagonizing ZNF598-mediated 40S ubiquitination. This is Ubiquitin carboxyl-terminal hydrolase 21 from Mus musculus (Mouse).